Here is a 731-residue protein sequence, read N- to C-terminus: Cucumisin (731 aa).

A signal peptide spans 1–22; it reads MSSSLIFKLFFFSLFFSNRLAS. A propeptide spans 23-110 (activation peptide); the sequence is RLDSDDDGKN…VFLNEMNELH (88 aa). Positions 34 to 110 constitute an Inhibitor I9 domain; the sequence is YIVYMGRKLE…VFLNEMNELH (77 aa). The region spanning 114–584 is the Peptidase S8 domain; sequence SWDFLGFPLT…SGHVNPLKAV (471 aa). The active-site Charge relay system is the D140. The cysteines at positions 166 and 174 are disulfide-linked. The active-site Charge relay system is H204. 2 disulfides stabilise this stretch: C245-C250 and C380-C397. N466 carries N-linked (GlcNAc...) asparagine glycosylation. The active-site Charge relay system is the S525. A propeptide spanning residues 616–731 is cleaved from the precursor; sequence GDYSACTSGN…RSPITITSLV (116 aa). N652 is a glycosylation site (N-linked (GlcNAc...) asparagine).

The protein belongs to the peptidase S8 family. In terms of assembly, monomer and dimer. The C-terminal propeptide is autocleaved. In terms of tissue distribution, specifically expressed in fruits. Expressed in sarcocarp (at protein level).

It is found in the secreted. The enzyme catalyses Hydrolysis of proteins with broad specificity.. The sequence is that of Cucumisin from Cucumis melo (Muskmelon).